A 78-amino-acid polypeptide reads, in one-letter code: Probable cytochrome c oxidase subunit 6B (78 aa).

Positions 21–64 (TKHCWANYVDYYGCVKHYNGDNSKCQTFFNSMNSLCPAAWISEW) constitute a CHCH domain. Positions 24–34 (CWANYVDYYGC) match the Cx9C motif motif. 2 disulfide bridges follow: cysteine 24–cysteine 56 and cysteine 34–cysteine 45. The Cx10C motif signature appears at 45-56 (CQTFFNSMNSLC).

The protein belongs to the cytochrome c oxidase subunit 6B family. In terms of assembly, component of the cytochrome c oxidase (complex IV, CIV), a multisubunit enzyme composed of a catalytic core of 3 subunits and several supernumerary subunits. The complex exists as a monomer or a dimer and forms supercomplexes (SCs) in the inner mitochondrial membrane with ubiquinol-cytochrome c oxidoreductase (cytochrome b-c1 complex, complex III, CIII).

It is found in the mitochondrion inner membrane. Its pathway is energy metabolism; oxidative phosphorylation. Functionally, component of the cytochrome c oxidase, the last enzyme in the mitochondrial electron transport chain which drives oxidative phosphorylation. The respiratory chain contains 3 multisubunit complexes succinate dehydrogenase (complex II, CII), ubiquinol-cytochrome c oxidoreductase (cytochrome b-c1 complex, complex III, CIII) and cytochrome c oxidase (complex IV, CIV), that cooperate to transfer electrons derived from NADH and succinate to molecular oxygen, creating an electrochemical gradient over the inner membrane that drives transmembrane transport and the ATP synthase. Cytochrome c oxidase is the component of the respiratory chain that catalyzes the reduction of oxygen to water. Electrons originating from reduced cytochrome c in the intermembrane space (IMS) are transferred via the dinuclear copper A center (CU(A)) of subunit 2 and heme A of subunit 1 to the active site in subunit 1, a binuclear center (BNC) formed by heme A3 and copper B (CU(B)). The BNC reduces molecular oxygen to 2 water molecules using 4 electrons from cytochrome c in the IMS and 4 protons from the mitochondrial matrix. This chain is Probable cytochrome c oxidase subunit 6B, found in Dictyostelium discoideum (Social amoeba).